Reading from the N-terminus, the 95-residue chain is Co-chaperonin GroES (95 aa).

Belongs to the GroES chaperonin family. In terms of assembly, heptamer of 7 subunits arranged in a ring. Interacts with the chaperonin GroEL.

The protein resides in the cytoplasm. Together with the chaperonin GroEL, plays an essential role in assisting protein folding. The GroEL-GroES system forms a nano-cage that allows encapsulation of the non-native substrate proteins and provides a physical environment optimized to promote and accelerate protein folding. GroES binds to the apical surface of the GroEL ring, thereby capping the opening of the GroEL channel. The sequence is that of Co-chaperonin GroES from Dichelobacter nodosus (strain VCS1703A).